Consider the following 83-residue polypeptide: ATP synthase subunit c, chloroplastic (83 aa).

Transmembrane regions (helical) follow at residues 3 to 23 (PLIA…AAIG) and 57 to 77 (FAFM…LLFA).

It belongs to the ATPase C chain family. In terms of assembly, F-type ATPases have 2 components, F(1) - the catalytic core - and F(0) - the membrane proton channel. F(1) has five subunits: alpha(3), beta(3), gamma(1), delta(1), epsilon(1). F(0) has four main subunits: a(1), b(1), b'(1) and c(10-14). The alpha and beta chains form an alternating ring which encloses part of the gamma chain. F(1) is attached to F(0) by a central stalk formed by the gamma and epsilon chains, while a peripheral stalk is formed by the delta, b and b' chains.

The protein resides in the plastid. It is found in the chloroplast thylakoid membrane. In terms of biological role, f(1)F(0) ATP synthase produces ATP from ADP in the presence of a proton or sodium gradient. F-type ATPases consist of two structural domains, F(1) containing the extramembraneous catalytic core and F(0) containing the membrane proton channel, linked together by a central stalk and a peripheral stalk. During catalysis, ATP synthesis in the catalytic domain of F(1) is coupled via a rotary mechanism of the central stalk subunits to proton translocation. Functionally, key component of the F(0) channel; it plays a direct role in translocation across the membrane. A homomeric c-ring of between 10-14 subunits forms the central stalk rotor element with the F(1) delta and epsilon subunits. The protein is ATP synthase subunit c, chloroplastic of Oedogonium cardiacum (Filamentous green alga).